A 570-amino-acid polypeptide reads, in one-letter code: AT-rich interactive domain-containing protein 3A (570 aa).

The segment at 102-215 (AGVPNSSSGH…LAPQAQSQHH (114 aa)) is disordered. Positions 120–160 (DIDDEDDEDDDPELDRGMDDEERDMDEDDSMNEGGGDEDLE) are enriched in acidic residues. Ser-179 carries the phosphoserine modification. Residues 232 to 324 (DEKRKEFLDD…YLYPYECEKR (93 aa)) form the ARID domain. At Ser-356 the chain carries Phosphoserine. Positions 429 to 523 (AALEQLREKL…GVLFARKPAI (95 aa)) constitute an REKLES domain. The important for nuclear localization stretch occupies residues 430–473 (ALEQLREKLESGEPPEKKVMLMAEEQQRIMQHALQQNLFAMATQ). A homodimerization region spans residues 475-495 (PMNIKLNNRDDRQETALNLST). The tract at residues 519-531 (RKPAIGFMPSSQR) is important for cytoplasmic localization. A disordered region spans residues 528–570 (SSQRVHHQHSSQGKSNSPGLSSHIQPSSSASSSASSHGPATSP). A phosphoserine mark is found at Ser-542 and Ser-569. The span at 548-570 (SSHIQPSSSASSSASSHGPATSP) shows a compositional bias: low complexity.

In terms of assembly, homodimer.

It is found in the nucleus. Its subcellular location is the cytoplasm. Its function is as follows. Transcription factor. The protein is AT-rich interactive domain-containing protein 3A (arid3a) of Danio rerio (Zebrafish).